The chain runs to 166 residues: Ribonuclease P protein component (166 aa).

Belongs to the RnpA family. In terms of assembly, consists of a catalytic RNA component (M1 or rnpB) and a protein subunit.

It catalyses the reaction Endonucleolytic cleavage of RNA, removing 5'-extranucleotides from tRNA precursor.. Its function is as follows. RNaseP catalyzes the removal of the 5'-leader sequence from pre-tRNA to produce the mature 5'-terminus. It can also cleave other RNA substrates such as 4.5S RNA. The protein component plays an auxiliary but essential role in vivo by binding to the 5'-leader sequence and broadening the substrate specificity of the ribozyme. This chain is Ribonuclease P protein component, found in Helicobacter pylori (strain HPAG1).